A 92-amino-acid chain; its full sequence is Acylphosphatase (92 aa).

The cysteines at positions 5 and 49 are disulfide-linked. The region spanning 5-92 is the Acylphosphatase-like domain; it reads CIIAWIYGRV…SGELTDFRIR (88 aa). Residues R20 and N38 contribute to the active site.

It belongs to the acylphosphatase family.

The catalysed reaction is an acyl phosphate + H2O = a carboxylate + phosphate + H(+). This is Acylphosphatase from Escherichia coli O1:K1 / APEC.